The primary structure comprises 797 residues: Protein tamozhennic (797 aa).

Residues 79 to 146 enclose the PUB domain; the sequence is QNAIVAFETI…AAEDTFVLEG (68 aa). Disordered regions lie at residues 515–570 and 638–697; these read AGGI…ISDL and LSIT…SAGV. Residues 662–679 show a composition bias toward basic and acidic residues; it reads EKARTLDKKSGTGRREAK. Residues 735–766 form a RanBP2-type zinc finger; sequence IVTSPNEWSCSFCTFLNPDTKRICEMCCRSKD.

Homomultimer. Binds to dl and msl-1 via their nuclear localization signal (NLS). Also binds to Ran, Ran-like and mbo.

It localises to the cytoplasm. In terms of biological role, has an essential role during oogenesis and embryogenesis, perhaps in modulating the levels of nuclear import of additional proteins. Modulates the nuclear import of dorsal (dl), Dif and male specific lethal 1 (msl-1). Negatively regulates nuclear import of dl and controls the accumulation of dl in the nucleus after immune challenge. In Drosophila melanogaster (Fruit fly), this protein is Protein tamozhennic (tamo).